The primary structure comprises 136 residues: uncharacterized protein (136 aa).

An N-terminal signal peptide occupies residues 1 to 19 (MMTAAKRLGLYSALRACSA). The chain crosses the membrane as a helical span at residues 75–97 (FWFSHTCLVFGSNTILFASLNSF).

The protein resides in the membrane. This is an uncharacterized protein from Saccharomyces cerevisiae (strain ATCC 204508 / S288c) (Baker's yeast).